The sequence spans 298 residues: Putative S-adenosyl-L-methionine-dependent methyltransferase MAV_0778 (298 aa).

Residues D124 and 153–154 (DL) contribute to the S-adenosyl-L-methionine site.

This sequence belongs to the UPF0677 family.

Exhibits S-adenosyl-L-methionine-dependent methyltransferase activity. The sequence is that of Putative S-adenosyl-L-methionine-dependent methyltransferase MAV_0778 from Mycobacterium avium (strain 104).